Here is a 266-residue protein sequence, read N- to C-terminus: MLKVEPIPAFQDNYIWAIHDGHSAAVVDPGEAAPVEQFLAQRGLALGAIVITHHHGDHQGGVSDLLARHPSGPNGEPLPVIGPQGERIGHRTQAVREGDTVTLRHPAVTFRVLDVPGHTAGHVAYVGDLPGAGPVVFCGDTLFASGCGRLFEGTPAQMLASLDKLAALPGDTRVYCAHEYTRSNVRFAQAVEPANPDLAAWAARVDILREAGTPTVPTTVAHERAVNPFLRSRESTVRQAVRAQGGDVSGDAAAFGALRGWKDGFR.

His-53, His-55, Asp-57, His-58, His-118, Asp-140, and His-178 together coordinate Zn(2+).

The protein belongs to the metallo-beta-lactamase superfamily. Glyoxalase II family. Monomer. It depends on Zn(2+) as a cofactor.

It catalyses the reaction an S-(2-hydroxyacyl)glutathione + H2O = a 2-hydroxy carboxylate + glutathione + H(+). Its pathway is secondary metabolite metabolism; methylglyoxal degradation; (R)-lactate from methylglyoxal: step 2/2. Functionally, thiolesterase that catalyzes the hydrolysis of S-D-lactoyl-glutathione to form glutathione and D-lactic acid. This Cupriavidus metallidurans (strain ATCC 43123 / DSM 2839 / NBRC 102507 / CH34) (Ralstonia metallidurans) protein is Hydroxyacylglutathione hydrolase.